Here is a 590-residue protein sequence, read N- to C-terminus: Myo-inositol transporter 3A (590 aa).

Residues 1-57 (MSATHIENRDDSFLENKGIDHIGRPENNNGSQEPPSPSGFGGHLIDENLVRVEGEDK) are Cytoplasmic-facing. The segment covering 15–24 (ENKGIDHIGR) has biased composition (basic and acidic residues). Residues 15 to 40 (ENKGIDHIGRPENNNGSQEPPSPSGF) are disordered. A helical transmembrane segment spans residues 58–78 (VTWYLCFLISASAIAGFLFGY). Residues 79 to 105 (DTGVVGVALPLVGTDLGGSALNSSQQE) are Extracellular-facing. A glycan (N-linked (GlcNAc...) asparagine) is linked at Asn-100. Residues 106 to 126 (IITAGTTIGAIFGSAILGGWG) form a helical membrane-spanning segment. Residues 127 to 132 (DRLGRK) are Cytoplasmic-facing. The helical transmembrane segment at 133–153 (GAILVSDVFFTIGAVIIASSY) threads the bilayer. Over 154-157 (SVPQ) the chain is Extracellular. The chain crosses the membrane as a helical span at residues 158-178 (IIVGRIILGIGVGGAAVIAPL). Over 179-192 (FITETAPTAVRGRC) the chain is Cytoplasmic. Residues 193 to 213 (IGVNAFFIPFGQVVSDAIGAG) form a helical membrane-spanning segment. Residues 214 to 222 (VQNMHNGWR) are Extracellular-facing. A helical membrane pass occupies residues 223–243 (LLFALGAVPSLLQLLLFHYLP). The Cytoplasmic segment spans residues 244–325 (ESPRILILKG…AVSALQAAGQ (82 aa)). Residues 326-346 (LTGFNTLLYYAGTLFGLLGLS) form a helical membrane-spanning segment. Topologically, residues 347–349 (NPA) are extracellular. The helical transmembrane segment at 350–370 (LGGLIPAGTNAVFVLIGMSLV) threads the bilayer. Topologically, residues 371-376 (DKVGRR) are cytoplasmic. Residues 377-397 (GLLLIGVPIMLLGHVWNIVSF) traverse the membrane as a helical segment. Over 398–420 (YYMCKPTGGFLDTSYSYDTTDVG) the chain is Extracellular. Residues 421 to 441 (IVIGGIVFFVVGYGLTYSHLV) traverse the membrane as a helical segment. The Cytoplasmic segment spans residues 442 to 455 (WYQAEYLTLEVRSM). The helical transmembrane segment at 456–476 (GSGIATTVCWIANLVVSVSYL) threads the bilayer. Residues 477-485 (SELETMTPS) lie on the Extracellular side of the membrane. A helical membrane pass occupies residues 486–506 (GTYGFYFGISVIGFVFLVFCL). Over 507 to 590 (PETKQLSIDE…GGKRTPSASV (84 aa)) the chain is Cytoplasmic.

The protein belongs to the major facilitator superfamily. Sugar transporter (TC 2.A.1.1) family.

Its subcellular location is the cell membrane. The catalysed reaction is myo-inositol(out) + H(+)(out) = myo-inositol(in) + H(+)(in). Transporter for myo-inositol. This Cryptococcus neoformans var. grubii serotype A (strain H99 / ATCC 208821 / CBS 10515 / FGSC 9487) (Filobasidiella neoformans var. grubii) protein is Myo-inositol transporter 3A (ITR3A).